A 213-amino-acid polypeptide reads, in one-letter code: MTIAKIEDAIEAISRGEMVIVVDDEDRENEGDIIAASDSITPQQIAFMMNHARGLVCVAMPGERLDALDIPLMVSRNTESLKTAFTVSVDYIPGTTTGISAADRAKTVRALVSEGSRPEDFARPGHIFPLRANPEGVLGRTGHTEAAVDLCRLAGKFPSGTICEVANDDGTMARLPQLEIFAERHGLLVVTIKDLVSYLKGEVVEEMVQKQVA.

D-ribulose 5-phosphate contacts are provided by residues 27 to 28 (RE), Asp-32, 140 to 144 (RTGHT), and Glu-164. Residue Glu-28 participates in Mg(2+) binding. Mg(2+) is bound at residue His-143.

This sequence belongs to the DHBP synthase family. As to quaternary structure, homodimer. Mg(2+) is required as a cofactor. Requires Mn(2+) as cofactor.

It carries out the reaction D-ribulose 5-phosphate = (2S)-2-hydroxy-3-oxobutyl phosphate + formate + H(+). Its pathway is cofactor biosynthesis; riboflavin biosynthesis; 2-hydroxy-3-oxobutyl phosphate from D-ribulose 5-phosphate: step 1/1. Functionally, catalyzes the conversion of D-ribulose 5-phosphate to formate and 3,4-dihydroxy-2-butanone 4-phosphate. The chain is 3,4-dihydroxy-2-butanone 4-phosphate synthase from Agrobacterium fabrum (strain C58 / ATCC 33970) (Agrobacterium tumefaciens (strain C58)).